The primary structure comprises 574 residues: Septation ring formation regulator EzrA (574 aa).

Topologically, residues 1 to 7 are extracellular; that stretch reads MSSGIIL. Residues 8–26 traverse the membrane as a helical segment; it reads LLVAIVLLVIIAYVVGVVI. Residues 27–574 lie on the Cytoplasmic side of the membrane; that stretch reads RKRNDTLIAN…YEKTQERIRF (548 aa). Coiled-coil stretches lie at residues 104-141, 275-343, and 473-525; these read VRAKHEIDNVDSQLTIIEEDIVSIREALEVLKEQEEKN, LVSL…SAKY, and DIEA…VQKS.

This sequence belongs to the EzrA family.

It is found in the cell membrane. Negative regulator of FtsZ ring formation; modulates the frequency and position of FtsZ ring formation. Inhibits FtsZ ring formation at polar sites. Interacts either with FtsZ or with one of its binding partners to promote depolymerization. The protein is Septation ring formation regulator EzrA of Streptococcus agalactiae serotype III (strain NEM316).